A 669-amino-acid chain; its full sequence is Galactocerebrosidase (669 aa).

The N-terminal stretch at 1–26 is a signal peptide; it reads MTAAAGSAGHAAVPLLLCALLVPGGA. The substrate site is built by threonine 93, tryptophan 135, and asparagine 181. Glutamate 182 acts as the Proton donor/acceptor in catalysis. Catalysis depends on glutamate 258, which acts as the Nucleophile. Cysteine 271 and cysteine 378 are joined by a disulfide. An N-linked (GlcNAc...) asparagine glycan is attached at asparagine 363. Arginine 380 serves as a coordination point for substrate. N-linked (GlcNAc...) asparagine glycosylation is found at asparagine 387, asparagine 543, and asparagine 586.

This sequence belongs to the glycosyl hydrolase 59 family.

It is found in the lysosome. The catalysed reaction is a beta-D-galactosyl-(1&lt;-&gt;1')-N-acylsphing-4-enine + H2O = an N-acylsphing-4-enine + D-galactose. The enzyme catalyses beta-D-galactosyl-(1&lt;-&gt;1)-sphing-4-enine + H2O = sphing-4-enine + D-galactose. It catalyses the reaction a D-galactosylceramide + H2O = an N-acyl-sphingoid base + D-galactose. In terms of biological role, hydrolyzes the galactose ester bonds of glycolipids such as galactosylceramide and galactosylsphingosine. Enzyme with very low activity responsible for the lysosomal catabolism of galactosylceramide, a major lipid in myelin, kidney and epithelial cells of small intestine and colon. The sequence is that of Galactocerebrosidase from Canis lupus familiaris (Dog).